Consider the following 446-residue polypeptide: C4-dicarboxylate transport protein (446 aa).

9 consecutive transmembrane segments (helical) span residues 25–45 (VQVL…PAIG), 58–78 (LVKM…IASI), 93–113 (FAYF…VANV), 159–179 (ALTE…GLAL), 199–219 (VFFG…FGAM), 236–256 (LLIA…LGAV), 322–342 (IYMT…LSLG), 370–390 (AATL…ILGI), and 400–420 (LTNF…EKGL).

It belongs to the dicarboxylate/amino acid:cation symporter (DAACS) (TC 2.A.23) family.

It is found in the cell inner membrane. Functionally, responsible for the transport of dicarboxylates such as succinate, fumarate, and malate from the periplasm across the membrane. This Sphingopyxis alaskensis (strain DSM 13593 / LMG 18877 / RB2256) (Sphingomonas alaskensis) protein is C4-dicarboxylate transport protein.